Here is a 309-residue protein sequence, read N- to C-terminus: Isoaspartyl peptidase/L-asparaginase (309 aa).

The Nucleophile role is filled by Thr-166. Substrate-binding positions include 194 to 197 (RVGD) and 217 to 220 (TGHG).

This sequence belongs to the Ntn-hydrolase family. In terms of assembly, heterodimer of an alpha and beta chain produced by autocleavage. Cleaved into an alpha and beta chain by autocatalysis; this activates the enzyme. The N-terminal residue of the beta subunit is responsible for the nucleophile hydrolase activity.

The protein localises to the cytoplasm. The enzyme catalyses L-asparagine + H2O = L-aspartate + NH4(+). It catalyses the reaction Cleavage of a beta-linked Asp residue from the N-terminus of a polypeptide.. Its function is as follows. Has both L-asparaginase and beta-aspartyl peptidase activity. Does not have aspartylglucosaminidase activity and is inactive toward GlcNAc-L-Asn. Likewise, has no activity toward glutamine. This is Isoaspartyl peptidase/L-asparaginase (asrgl1) from Xenopus laevis (African clawed frog).